The chain runs to 694 residues: MANKREFSLEKTRNIGIMAHIDAGKTTTTERILYYTGKIHKIGETHEGDSQMDWMEEEKERGITITSAATTAQWKDHRINIIDTPGHVDFTIEVERSLRVLDGAVTVLDAQSGVEPQTENVWRQAENYGVPRIVFVNKMDKIGANFDFSVKSLHERLNANAIAVQMPIGAEDQFEGVIDLFDMVADVYDEDKLGAKWETIPVPDEYKEEAESRREEMIEEIAEVDDDIMEKFLGGEEISNEELKAALRRATLDLKAFPVFAGSAFKNKGVQMMLDGVVDYLPSPLDVKPYIAHDKEGNEVELLADDNKPFAALAFKIATDPFVGRLTFIRVYTGSLKSGSYVLNASKNQRERVGRLLQMHANSRTEIPEVFSGDIAGAIGLKDTTTGDSLTDPAHPLILESLDIPAPVIQVSVEPKSKADRDKMDVALQKLTEEDPTFRAETNPETGETLISGMGELHLDIMVERMKREFNVEATIGEPQVAYRETFTVPTQAQGKFVRQSGGKGQYGDVWIEFTPNEGKGYEFEDAIVGGVVPREYIPSVDAGLQEAMKNGVLAGYPLIDVKAKLYDGSYHEVDSSEAAFKVAASLALKNAASKAGAVILEPIMKVQVIAPEEYLGDVMGSITARRGQMEGMEDRAGAKVINAMVPLSEMFGYATTLRSSTQGRGTFTMVMDHYSPCPKSIQAEIIKKRGGNA.

The tr-type G domain maps to 10–285 (EKTRNIGIMA…GVVDYLPSPL (276 aa)). GTP contacts are provided by residues 19 to 26 (AHIDAGKT), 83 to 87 (DTPGH), and 137 to 140 (NKMD).

It belongs to the TRAFAC class translation factor GTPase superfamily. Classic translation factor GTPase family. EF-G/EF-2 subfamily.

Its subcellular location is the cytoplasm. Its function is as follows. Catalyzes the GTP-dependent ribosomal translocation step during translation elongation. During this step, the ribosome changes from the pre-translocational (PRE) to the post-translocational (POST) state as the newly formed A-site-bound peptidyl-tRNA and P-site-bound deacylated tRNA move to the P and E sites, respectively. Catalyzes the coordinated movement of the two tRNA molecules, the mRNA and conformational changes in the ribosome. The protein is Elongation factor G of Lactobacillus delbrueckii subsp. bulgaricus (strain ATCC 11842 / DSM 20081 / BCRC 10696 / JCM 1002 / NBRC 13953 / NCIMB 11778 / NCTC 12712 / WDCM 00102 / Lb 14).